We begin with the raw amino-acid sequence, 244 residues long: MTTLFISDLHLEESRPDITGAFLTFLRDKALGVERLYILGDFFEAWIGDDERTPLQEQVAAALREVRDTGTDIYLMHGNRDFLIGEDFCARAGAILLDDPTVVDLYGTPALLMHGDSLCTADVEYQKFRANMRNPQTVKMLLSRPLKDRQLMARQLREISMAKNQGKAETIMDVTPEEVVKELEAHNVQLMIHGHTHRPAIHELEANGRPARRIVLGDWDENVWWLEASKNQPVALRHQPLADF.

Mn(2+) contacts are provided by Asp-8, His-10, Asp-41, Asn-79, and His-114. Position 79–80 (79–80 (NR)) interacts with substrate. Asp-122, Ser-160, Asn-164, Lys-167, and His-195 together coordinate substrate. The Mn(2+) site is built by His-195 and His-197.

Belongs to the LpxH family. Requires Mn(2+) as cofactor.

The protein resides in the cell inner membrane. It carries out the reaction UDP-2-N,3-O-bis[(3R)-3-hydroxytetradecanoyl]-alpha-D-glucosamine + H2O = 2-N,3-O-bis[(3R)-3-hydroxytetradecanoyl]-alpha-D-glucosaminyl 1-phosphate + UMP + 2 H(+). Its pathway is glycolipid biosynthesis; lipid IV(A) biosynthesis; lipid IV(A) from (3R)-3-hydroxytetradecanoyl-[acyl-carrier-protein] and UDP-N-acetyl-alpha-D-glucosamine: step 4/6. Its function is as follows. Hydrolyzes the pyrophosphate bond of UDP-2,3-diacylglucosamine to yield 2,3-diacylglucosamine 1-phosphate (lipid X) and UMP by catalyzing the attack of water at the alpha-P atom. Involved in the biosynthesis of lipid A, a phosphorylated glycolipid that anchors the lipopolysaccharide to the outer membrane of the cell. The protein is UDP-2,3-diacylglucosamine hydrolase of Marinobacter nauticus (strain ATCC 700491 / DSM 11845 / VT8) (Marinobacter aquaeolei).